Consider the following 152-residue polypeptide: Transcription factor XE1.1 (152 aa).

2 disordered regions span residues 1 to 54 (RDDF…ANNA) and 123 to 152 (KVSA…MGHM). Composition is skewed to basic and acidic residues over residues 7–22 (DDMK…EMKS) and 38–54 (PEQK…ANNA). The 54-residue stretch at 47–100 (ERRMANNARERLRVRDINEAFKELGRMCQLHLKSEKPQTKLLILHQAVAVILNL) folds into the bHLH domain. Residues 102–125 (QQVRERNLNPKAACLKRREEEKVS) form a class A specific domain region. Polar residues predominate over residues 143–152 (TDTTNPMGHM).

Efficient DNA binding requires dimerization with another bHLH protein. Forms homo- or heterooligomers with myogenin, E12 and ITF2 proteins.

Its subcellular location is the nucleus. Functionally, transcriptional regulator. Involved in the initiation of neuronal differentiation. Activates transcription by binding to the E box-containing promoter. The protein is Transcription factor XE1.1 of Xenopus laevis (African clawed frog).